The sequence spans 196 residues: Protein TEX261 (196 aa).

The next 5 membrane-spanning stretches (helical) occupy residues 3–23, 42–62, 70–90, 97–117, and 125–145; these read FMYV…TLAV, SRII…LYVF, IGVG…FPFI, FILS…FFAE, and VLAY…VSLS.

The protein belongs to the SVP26 family. In terms of tissue distribution, detected in testis.

It localises to the membrane. The polypeptide is Protein TEX261 (Tex261) (Mus musculus (Mouse)).